The primary structure comprises 288 residues: Phosphatidate cytidylyltransferase (288 aa).

The next 7 membrane-spanning stretches (helical) occupy residues 10 to 30 (IVLI…YFAL), 52 to 72 (PLIR…WLYT), 89 to 109 (LLLI…ISYP), 118 to 138 (NPLL…AGVL), 152 to 172 (GLFL…GAYF), 192 to 212 (WEGV…FIHF), and 223 to 243 (ITGF…GDLT).

It belongs to the CDS family.

It is found in the cell inner membrane. The enzyme catalyses a 1,2-diacyl-sn-glycero-3-phosphate + CTP + H(+) = a CDP-1,2-diacyl-sn-glycerol + diphosphate. It functions in the pathway phospholipid metabolism; CDP-diacylglycerol biosynthesis; CDP-diacylglycerol from sn-glycerol 3-phosphate: step 3/3. The polypeptide is Phosphatidate cytidylyltransferase (cdsA) (Haemophilus influenzae (strain ATCC 51907 / DSM 11121 / KW20 / Rd)).